A 323-amino-acid chain; its full sequence is 8-oxo-dGDP phosphatase NUDT18 (323 aa).

The Nudix hydrolase domain maps to 37 to 167 (RLRKNVCYVV…DILHLVELAA (131 aa)). L58 contacts Mg(2+). The Nudix box motif lies at 76–97 (GRMEPGETIVEALQREVKEEAG).

This sequence belongs to the Nudix hydrolase family. The cofactor is Mn(2+). Mg(2+) serves as cofactor.

The catalysed reaction is 8-oxo-dGDP + H2O = 8-oxo-dGMP + phosphate + H(+). The enzyme catalyses 8-oxo-dADP + H2O = 8-oxo-dAMP + phosphate + H(+). It catalyses the reaction 2-oxo-dADP + H2O = 2-oxo-dAMP + phosphate + H(+). It carries out the reaction 8-oxo-GDP + H2O = 8-oxo-GMP + phosphate + H(+). Mediates the hydrolysis of oxidized nucleoside diphosphate derivatives. Hydrolyzes 8-oxo-7,8-dihydroguanine (8-oxo-Gua)-containing deoxyribo- and ribonucleoside diphosphates to the monophosphates. Hydrolyzes 8-oxo-dGDP and 8-oxo-GDP with the same efficiencies. Also hydrolyzes 8-OH-dADP and 2-OH-dADP. Exhibited no or minimal hydrolysis activity against 8-oxo-dGTP, 8-oxo-GTP, dGTP, GTP, dGDP and GDP. Probably removes oxidized guanine nucleotides from both the DNA and RNA precursor pools. The protein is 8-oxo-dGDP phosphatase NUDT18 of Homo sapiens (Human).